A 320-amino-acid chain; its full sequence is Ribosomal RNA small subunit methyltransferase H (320 aa).

Residues Gly36 to His38, Asp56, Phe82, Asp103, and Gln110 each bind S-adenosyl-L-methionine.

Belongs to the methyltransferase superfamily. RsmH family.

It localises to the cytoplasm. It carries out the reaction cytidine(1402) in 16S rRNA + S-adenosyl-L-methionine = N(4)-methylcytidine(1402) in 16S rRNA + S-adenosyl-L-homocysteine + H(+). Its function is as follows. Specifically methylates the N4 position of cytidine in position 1402 (C1402) of 16S rRNA. In Chromobacterium violaceum (strain ATCC 12472 / DSM 30191 / JCM 1249 / CCUG 213 / NBRC 12614 / NCIMB 9131 / NCTC 9757 / MK), this protein is Ribosomal RNA small subunit methyltransferase H.